The following is a 615-amino-acid chain: Cilia- and flagella-associated protein 52 (615 aa).

11 WD repeats span residues 54–98 (GHSD…LIHR), 101–142 (LHKV…AICG), 145–184 (CNTN…NKLR), 232–275 (GPAK…AGTK), 320–359 (AHND…ELLR), 362–401 (VPNL…IIFT), 405–444 (AHQK…QTLE), 449–488 (DHKG…RRTS), 490–529 (FANT…AIRI), 533–572 (SDLD…CYFV), and 575–614 (AHSG…TLAD).

Belongs to the CFAP52 family.

The protein resides in the cytoplasm. It localises to the cell projection. Its subcellular location is the cilium. It is found in the flagellum. May play a role in cell growth and/or survival. This is Cilia- and flagella-associated protein 52 from Chlamydomonas reinhardtii (Chlamydomonas smithii).